Here is a 161-residue protein sequence, read N- to C-terminus: Endoribonuclease YbeY (161 aa).

Residues histidine 127, histidine 131, and histidine 137 each coordinate Zn(2+).

The protein belongs to the endoribonuclease YbeY family. Requires Zn(2+) as cofactor.

Its subcellular location is the cytoplasm. Functionally, single strand-specific metallo-endoribonuclease involved in late-stage 70S ribosome quality control and in maturation of the 3' terminus of the 16S rRNA. The chain is Endoribonuclease YbeY from Listeria monocytogenes serotype 4a (strain HCC23).